We begin with the raw amino-acid sequence, 363 residues long: 3-isopropylmalate dehydrogenase (363 aa).

Residue 78–91 (GPKWENLPPESQPE) participates in NAD(+) binding. Arg99, Arg109, Arg138, and Asp227 together coordinate substrate. Asp227, Asp251, and Asp255 together coordinate Mg(2+). An NAD(+)-binding site is contributed by 285–297 (GSAPDIAGKNIAN).

This sequence belongs to the isocitrate and isopropylmalate dehydrogenases family. LeuB type 1 subfamily. As to quaternary structure, homodimer. The cofactor is Mg(2+). Mn(2+) serves as cofactor.

The protein localises to the cytoplasm. It carries out the reaction (2R,3S)-3-isopropylmalate + NAD(+) = 4-methyl-2-oxopentanoate + CO2 + NADH. The protein operates within amino-acid biosynthesis; L-leucine biosynthesis; L-leucine from 3-methyl-2-oxobutanoate: step 3/4. In terms of biological role, catalyzes the oxidation of 3-carboxy-2-hydroxy-4-methylpentanoate (3-isopropylmalate) to 3-carboxy-4-methyl-2-oxopentanoate. The product decarboxylates to 4-methyl-2 oxopentanoate. The chain is 3-isopropylmalate dehydrogenase from Salmonella paratyphi A (strain ATCC 9150 / SARB42).